The chain runs to 145 residues: D-aminoacyl-tRNA deacylase (145 aa).

Residues 137–138 (GP) carry the Gly-cisPro motif, important for rejection of L-amino acids motif.

Belongs to the DTD family. In terms of assembly, homodimer.

The protein localises to the cytoplasm. The enzyme catalyses glycyl-tRNA(Ala) + H2O = tRNA(Ala) + glycine + H(+). It carries out the reaction a D-aminoacyl-tRNA + H2O = a tRNA + a D-alpha-amino acid + H(+). In terms of biological role, an aminoacyl-tRNA editing enzyme that deacylates mischarged D-aminoacyl-tRNAs. Also deacylates mischarged glycyl-tRNA(Ala), protecting cells against glycine mischarging by AlaRS. Acts via tRNA-based rather than protein-based catalysis; rejects L-amino acids rather than detecting D-amino acids in the active site. By recycling D-aminoacyl-tRNA to D-amino acids and free tRNA molecules, this enzyme counteracts the toxicity associated with the formation of D-aminoacyl-tRNA entities in vivo and helps enforce protein L-homochirality. This is D-aminoacyl-tRNA deacylase from Salmonella paratyphi C (strain RKS4594).